The chain runs to 111 residues: uncharacterized protein (111 aa).

It is found in the mitochondrion. This is an uncharacterized protein from Arabidopsis thaliana (Mouse-ear cress).